The chain runs to 184 residues: Large ribosomal subunit protein uL5 (184 aa).

Belongs to the universal ribosomal protein uL5 family. As to quaternary structure, part of the 50S ribosomal subunit; part of the 5S rRNA/L5/L18/L25 subcomplex. Contacts the 5S rRNA and the P site tRNA. Forms a bridge to the 30S subunit in the 70S ribosome.

Functionally, this is one of the proteins that bind and probably mediate the attachment of the 5S RNA into the large ribosomal subunit, where it forms part of the central protuberance. In the 70S ribosome it contacts protein S13 of the 30S subunit (bridge B1b), connecting the 2 subunits; this bridge is implicated in subunit movement. Contacts the P site tRNA; the 5S rRNA and some of its associated proteins might help stabilize positioning of ribosome-bound tRNAs. This chain is Large ribosomal subunit protein uL5, found in Pelagibacter ubique (strain HTCC1062).